Here is a 171-residue protein sequence, read N- to C-terminus: MSSEEQEDVDEDIQYFVRIGQTDLDGTKTVERALAELGGVGRRVARIVADEAGVDRTATMGGLEDDAIESVTDAVDSFTEHAPAWLANRQNDFYTGENQHITGTDVELTRDQDINRMRMIRSYKGIRHERGQKVRGQRTKSTGRTEGTIGVNVEAIKEEQAEDDAADGGEE.

The segment at 128–171 (HERGQKVRGQRTKSTGRTEGTIGVNVEAIKEEQAEDDAADGGEE) is disordered. The segment covering 160–171 (QAEDDAADGGEE) has biased composition (acidic residues).

Belongs to the universal ribosomal protein uS13 family. Part of the 30S ribosomal subunit. Forms a loose heterodimer with protein S19. Forms two bridges to the 50S subunit in the 70S ribosome.

Located at the top of the head of the 30S subunit, it contacts several helices of the 16S rRNA. In the 70S ribosome it contacts the 23S rRNA (bridge B1a) and protein L5 of the 50S subunit (bridge B1b), connecting the 2 subunits; these bridges are implicated in subunit movement. In Halobacterium salinarum (strain ATCC 700922 / JCM 11081 / NRC-1) (Halobacterium halobium), this protein is Small ribosomal subunit protein uS13.